The chain runs to 473 residues: Photosystem II CP43 reaction center protein (473 aa).

A propeptide spanning residues 1-14 (MKTLYSLRRFYHVE) is cleaved from the precursor. Threonine 15 carries the N-acetylthreonine modification. Threonine 15 is subject to Phosphothreonine. The next 5 helical transmembrane spans lie at 69–93 (LFEVAHFVPEKPMYEQGLILLPHLA), 134–155 (LLGPETLEESFPFFGYVWKDRN), 178–200 (KAFYFGGIYDTWAPGGGDVRKIT), 255–275 (KPFAWARRALVWSGEAYLSYS), and 291–312 (WFNNTAYPSEFYGPTGPEASQA). [CaMn4O5] cluster is bound at residue glutamate 367. A helical transmembrane segment spans residues 447 to 471 (RARAAAAGFEKGIDRDFEPVLSMTP).

It belongs to the PsbB/PsbC family. PsbC subfamily. As to quaternary structure, PSII is composed of 1 copy each of membrane proteins PsbA, PsbB, PsbC, PsbD, PsbE, PsbF, PsbH, PsbI, PsbJ, PsbK, PsbL, PsbM, PsbT, PsbX, PsbY, PsbZ, Psb30/Ycf12, at least 3 peripheral proteins of the oxygen-evolving complex and a large number of cofactors. It forms dimeric complexes. It depends on Binds multiple chlorophylls and provides some of the ligands for the Ca-4Mn-5O cluster of the oxygen-evolving complex. It may also provide a ligand for a Cl- that is required for oxygen evolution. PSII binds additional chlorophylls, carotenoids and specific lipids. as a cofactor.

The protein localises to the plastid. The protein resides in the chloroplast thylakoid membrane. In terms of biological role, one of the components of the core complex of photosystem II (PSII). It binds chlorophyll and helps catalyze the primary light-induced photochemical processes of PSII. PSII is a light-driven water:plastoquinone oxidoreductase, using light energy to abstract electrons from H(2)O, generating O(2) and a proton gradient subsequently used for ATP formation. In Pisum sativum (Garden pea), this protein is Photosystem II CP43 reaction center protein.